A 291-amino-acid chain; its full sequence is tRNA dimethylallyltransferase (291 aa).

5-12 (GPTAGGKS) is an ATP binding site. 7-12 (TAGGKS) provides a ligand contact to substrate. The interval 30-33 (DSMQ) is interaction with substrate tRNA.

It belongs to the IPP transferase family. As to quaternary structure, monomer. It depends on Mg(2+) as a cofactor.

The enzyme catalyses adenosine(37) in tRNA + dimethylallyl diphosphate = N(6)-dimethylallyladenosine(37) in tRNA + diphosphate. In terms of biological role, catalyzes the transfer of a dimethylallyl group onto the adenine at position 37 in tRNAs that read codons beginning with uridine, leading to the formation of N6-(dimethylallyl)adenosine (i(6)A). The chain is tRNA dimethylallyltransferase from Frankia casuarinae (strain DSM 45818 / CECT 9043 / HFP020203 / CcI3).